The primary structure comprises 340 residues: Protein jhp_1168 (340 aa).

As to quaternary structure, seems to interact with H.pylori HolB.

In terms of biological role, could be the functional equivalent of DNA polymerase III delta subunit (HolA). The polypeptide is Protein jhp_1168 (Helicobacter pylori (strain J99 / ATCC 700824) (Campylobacter pylori J99)).